The primary structure comprises 400 residues: ATP-dependent rRNA helicase RRP3 (400 aa).

The Q motif motif lies at 1–29 (MEFGDLRIDESLIKTCQEKGITRPTEVQR). In terms of domain architecture, Helicase ATP-binding spans 32-202 (IPAVLGGGDV…SSILKRPKTI (171 aa)). Residue 45–52 (SQTGSGKT) participates in ATP binding. The short motif at 150-153 (DEAD) is the DEAD box element. The 145-residue stretch at 229–373 (ALVELLEMSQ…EFKMMKKNFG (145 aa)) folds into the Helicase C-terminal domain.

It belongs to the DEAD box helicase family. DDX47/RRP3 subfamily. In terms of assembly, interacts with the SSU processome.

The protein resides in the nucleus. It carries out the reaction ATP + H2O = ADP + phosphate + H(+). ATP-dependent rRNA helicase required for pre-ribosomal RNA processing. Involved in the maturation of the 35S-pre-rRNA and to its cleavage to mature 18S rRNA. The chain is ATP-dependent rRNA helicase RRP3 from Encephalitozoon cuniculi (strain GB-M1) (Microsporidian parasite).